Here is a 211-residue protein sequence, read N- to C-terminus: Cyclin-dependent kinase inhibitor 3 (211 aa).

The tract at residues 1–20 is disordered; sequence MKPPISIQASEFDSSDEEPV. The interval 1 to 34 is interaction with CDK2; the sequence is MKPPISIQASEFDSSDEEPVDEEQTPIQISWLPL. Positions 32 to 200 constitute a Tyrosine-protein phosphatase domain; the sequence is LPLSRVNCSQ…FRDKLAAYLS (169 aa). Cys140 serves as the catalytic Phosphocysteine intermediate.

It belongs to the protein-tyrosine phosphatase family. Interacts with cyclin-dependent kinases such as CDK1, CDK2 and CDK3. Does not interact with CDK4. Interacts (via C-terminus) with phosphorylated CDK2 (via C-terminal helix). Interacts with MS4A3 (via C-terminus); the interaction enhances CDKN3 enzymatic activity.

It localises to the cytoplasm. The protein resides in the perinuclear region. The catalysed reaction is O-phospho-L-tyrosyl-[protein] + H2O = L-tyrosyl-[protein] + phosphate. It catalyses the reaction O-phospho-L-seryl-[protein] + H2O = L-seryl-[protein] + phosphate. The enzyme catalyses O-phospho-L-threonyl-[protein] + H2O = L-threonyl-[protein] + phosphate. Functionally, may play a role in cell cycle regulation. Dual specificity phosphatase active toward substrates containing either phosphotyrosine or phosphoserine residues. Dephosphorylates CDK2 at 'Thr-160' in a cyclin-dependent manner. This chain is Cyclin-dependent kinase inhibitor 3, found in Mus musculus (Mouse).